The primary structure comprises 166 residues: Endoribonuclease YbeY (166 aa).

The Zn(2+) site is built by H132, H136, and H142.

It belongs to the endoribonuclease YbeY family. Zn(2+) serves as cofactor.

The protein localises to the cytoplasm. In terms of biological role, single strand-specific metallo-endoribonuclease involved in late-stage 70S ribosome quality control and in maturation of the 3' terminus of the 16S rRNA. The chain is Endoribonuclease YbeY from Clostridium botulinum (strain Alaska E43 / Type E3).